We begin with the raw amino-acid sequence, 729 residues long: Receptor-like protein 2 (729 aa).

A signal peptide spans 1–44 (MRSKAKGLVRPLITKPVQPLSSHMHLFLLCILFLSALFLTLSEA). Positions 45–82 (VCNLQDRESLIWFSGNVSSSVSPLNWNLSIDCCSWEGI) are N-cap. Residues 45-707 (VCNLQDRESL…AKENDELNRT (663 aa)) lie on the Extracellular side of the membrane. Asparagine 60 and asparagine 71 each carry an N-linked (GlcNAc...) asparagine glycan. LRR repeat units follow at residues 89–113 (DSHV…VQNI), 114–137 (HRLS…FFST), 139–163 (DQLM…AFGN), 168–193 (FFSI…VYLQ), 195–219 (TINL…MCRS), 220–244 (SPQL…LGRC), 245–268 (LRLT…IYNL), 269–292 (SELE…ITRL), 293–316 (RKLT…IGNL), 317–340 (SSLR…LANC), 342–364 (KLVK…EFSQ), 365–389 (LQSL…IFSC), 391–413 (SLTA…VLEL), 414–437 (ESLS…SILQ), 439–464 (CRKL…DFLS), 468–492 (FPKL…LINL), 493–515 (NKVE…WLGT), 516–540 (LPDL…LFQL), 542–560 (ALMS…PIFL), and 561–584 (NPNN…IYIR). Residues asparagine 145 and asparagine 163 are each glycosylated (N-linked (GlcNAc...) asparagine). Asparagine 202 and asparagine 205 each carry an N-linked (GlcNAc...) asparagine glycan. Residues asparagine 256, asparagine 267, asparagine 288, asparagine 315, asparagine 330, and asparagine 339 are each glycosylated (N-linked (GlcNAc...) asparagine). Asparagine 375 carries N-linked (GlcNAc...) asparagine glycosylation. Asparagine 428 is a glycosylation site (N-linked (GlcNAc...) asparagine). Residues asparagine 564, asparagine 587, asparagine 611, asparagine 622, asparagine 635, asparagine 657, and asparagine 705 are each glycosylated (N-linked (GlcNAc...) asparagine). LRR repeat units lie at residues 599 to 623 (LKVL…LSNL), 624 to 647 (TNLE…LTNL), and 649 to 672 (FLSY…QFDT). A C-cap/acidic domain region spans residues 690–707 (LTSCKPTRAKENDELNRT). The chain crosses the membrane as a helical span at residues 708-728 (FLMGIAIGYFLSFVSILVVRA). Residue tryptophan 729 is a topological domain, cytoplasmic.

Belongs to the RLP family.

Its subcellular location is the cell membrane. Its function is as follows. Involved in the perception of CLV3 and CLV3-like peptides, that act as extracellular signals regulating meristems maintenance. This is Receptor-like protein 2 from Arabidopsis thaliana (Mouse-ear cress).